The primary structure comprises 230 residues: tRNA (cytidine-2'-O-)-methyltransferase TrmJ (230 aa).

S-adenosyl-L-methionine is bound by residues 79-81 (TSG), Gly115, Ile135, and 142-144 (PIM).

The protein belongs to the class IV-like SAM-binding methyltransferase superfamily. RNA methyltransferase TrmH family. In terms of assembly, homodimer.

The protein resides in the cytoplasm. It carries out the reaction cytidine(32) in tRNA + S-adenosyl-L-methionine = 2'-O-methylcytidine(32) in tRNA + S-adenosyl-L-homocysteine + H(+). In terms of biological role, catalyzes the formation of 2'O-methylated cytidine (Cm32) at position 32 in tRNA. This is tRNA (cytidine-2'-O-)-methyltransferase TrmJ from Methanocaldococcus jannaschii (strain ATCC 43067 / DSM 2661 / JAL-1 / JCM 10045 / NBRC 100440) (Methanococcus jannaschii).